Reading from the N-terminus, the 358-residue chain is Fructose-bisphosphate aldolase 5, cytosolic (358 aa).

The residue at position 2 (S2) is an N-acetylserine. Substrate is bound at residue R39. An S-glutathionyl cysteine; transient modification is found at C68. An S-glutathionyl cysteine; transient; alternate modification is found at C173. C173 bears the S-nitrosocysteine; transient; alternate mark. The Proton acceptor role is filled by E183. K225 functions as the Schiff-base intermediate with dihydroxyacetone-P in the catalytic mechanism. Substrate is bound by residues 266–268 (SGG) and R298. S350 carries the phosphoserine modification.

This sequence belongs to the class I fructose-bisphosphate aldolase family. In terms of assembly, homotetramer. Interacts with TRX3. In terms of processing, S-glutathionylated at Cys-68 and Cys-173. S-nitrosylated at Cys-173. In terms of tissue distribution, expressed in rosette leaves and cauline leaves.

It localises to the cytoplasm. Its subcellular location is the cytosol. The enzyme catalyses beta-D-fructose 1,6-bisphosphate = D-glyceraldehyde 3-phosphate + dihydroxyacetone phosphate. It participates in carbohydrate degradation; glycolysis; D-glyceraldehyde 3-phosphate and glycerone phosphate from D-glucose: step 4/4. Fructose-bisphosphate aldolase that plays a key role in glycolysis and gluconeogenesis. The polypeptide is Fructose-bisphosphate aldolase 5, cytosolic (Arabidopsis thaliana (Mouse-ear cress)).